The primary structure comprises 98 residues: UPF0235 protein APJL_1398 (98 aa).

It belongs to the UPF0235 family.

The sequence is that of UPF0235 protein APJL_1398 from Actinobacillus pleuropneumoniae serotype 3 (strain JL03).